The sequence spans 331 residues: DSC E3 ubiquitin ligase complex subunit D (331 aa).

A glycan (N-linked (GlcNAc...) asparagine) is linked at Asn26. 3 helical membrane passes run Ile63–Ala83, Pro107–Thr127, and Leu159–Glu179. The interval Ser188–Glu225 is disordered. Positions Arg196–Ser214 are enriched in basic and acidic residues.

In terms of assembly, component of the DSC E3 ubiquitin ligase complex composed of dscA, dscB, dscC and dscD.

It is found in the endoplasmic reticulum membrane. Its pathway is protein modification; protein ubiquitination. Functionally, component of the DSC E3 ubiquitin ligase complex which is required for the srbA transcriptional activator proteolytic cleavage to release the soluble transcription factor from the membrane in low oxygen or sterol conditions. Required for growth during hypoxia and triazole drug susceptibility, as well as for virulence in a murine model of invasive pulmonary aspergillosis (IPA). In Aspergillus fumigatus (strain ATCC MYA-4609 / CBS 101355 / FGSC A1100 / Af293) (Neosartorya fumigata), this protein is DSC E3 ubiquitin ligase complex subunit D.